The primary structure comprises 290 residues: Light-independent protochlorophyllide reductase iron-sulfur ATP-binding protein (290 aa).

ATP contacts are provided by residues 10 to 15 (GIGKST) and lysine 39. Serine 14 contacts Mg(2+). [4Fe-4S] cluster-binding residues include cysteine 95 and cysteine 129. 180 to 181 (NR) contacts ATP.

It belongs to the NifH/BchL/ChlL family. As to quaternary structure, homodimer. Protochlorophyllide reductase is composed of three subunits; ChlL, ChlN and ChlB. It depends on [4Fe-4S] cluster as a cofactor.

The protein localises to the plastid. Its subcellular location is the chloroplast. The enzyme catalyses chlorophyllide a + oxidized 2[4Fe-4S]-[ferredoxin] + 2 ADP + 2 phosphate = protochlorophyllide a + reduced 2[4Fe-4S]-[ferredoxin] + 2 ATP + 2 H2O. It participates in porphyrin-containing compound metabolism; chlorophyll biosynthesis (light-independent). Component of the dark-operative protochlorophyllide reductase (DPOR) that uses Mg-ATP and reduced ferredoxin to reduce ring D of protochlorophyllide (Pchlide) to form chlorophyllide a (Chlide). This reaction is light-independent. The L component serves as a unique electron donor to the NB-component of the complex, and binds Mg-ATP. The protein is Light-independent protochlorophyllide reductase iron-sulfur ATP-binding protein of Porphyra purpurea (Red seaweed).